Here is a 149-residue protein sequence, read N- to C-terminus: Ribonuclease H (149 aa).

The 142-residue stretch at 1–142 (MSDSVELFTD…ADQLANRGVD (142 aa)) folds into the RNase H type-1 domain. 4 residues coordinate Mg(2+): Asp-10, Glu-48, Asp-70, and Asp-134.

It belongs to the RNase H family. In terms of assembly, monomer. The cofactor is Mg(2+).

The protein localises to the cytoplasm. It carries out the reaction Endonucleolytic cleavage to 5'-phosphomonoester.. In terms of biological role, endonuclease that specifically degrades the RNA of RNA-DNA hybrids. The chain is Ribonuclease H from Pseudomonas savastanoi pv. phaseolicola (strain 1448A / Race 6) (Pseudomonas syringae pv. phaseolicola (strain 1448A / Race 6)).